Here is a 116-residue protein sequence, read N- to C-terminus: Iron-sulfur cluster insertion protein ErpA (116 aa).

Iron-sulfur cluster-binding residues include Cys-44, Cys-108, and Cys-110.

It belongs to the HesB/IscA family. As to quaternary structure, homodimer. Iron-sulfur cluster serves as cofactor.

Functionally, required for insertion of 4Fe-4S clusters for at least IspG. In Idiomarina loihiensis (strain ATCC BAA-735 / DSM 15497 / L2-TR), this protein is Iron-sulfur cluster insertion protein ErpA.